The sequence spans 873 residues: Mitogen-activated protein kinase kinase kinase kinase 3 (873 aa).

N-acetylmethionine is present on Met-1. A Protein kinase domain is found at Phe-16–Val-273. Residues Ile-22 to Val-30 and Lys-45 contribute to the ATP site. The Proton acceptor role is filled by Asp-136. 2 positions are modified to phosphoserine: Ser-329 and Ser-377. Residues Ala-389–Thr-518 form a disordered region. Over residues His-452–Lys-466 the composition is skewed to pro residues. The segment covering Val-487–Leu-499 has biased composition (polar residues). Residues Pro-535 to Val-846 enclose the CNH domain.

It belongs to the protein kinase superfamily. STE Ser/Thr protein kinase family. STE20 subfamily. In terms of assembly, interacts with SH3GL2. Interaction appears to regulate MAP4K3-mediated JNK activation. Mg(2+) is required as a cofactor.

The catalysed reaction is L-seryl-[protein] + ATP = O-phospho-L-seryl-[protein] + ADP + H(+). It catalyses the reaction L-threonyl-[protein] + ATP = O-phospho-L-threonyl-[protein] + ADP + H(+). Serine/threonine kinase that plays a role in the response to environmental stress. Appears to act upstream of the JUN N-terminal pathway. Activator of the Hippo signaling pathway which plays a pivotal role in organ size control and tumor suppression by restricting proliferation and promoting apoptosis. MAP4Ks act in parallel to and are partially redundant with STK3/MST2 and STK4/MST2 in the phosphorylation and activation of LATS1/2, and establish MAP4Ks as components of the expanded Hippo pathway. This is Mitogen-activated protein kinase kinase kinase kinase 3 (Map4k3) from Rattus norvegicus (Rat).